Reading from the N-terminus, the 282-residue chain is MEVITSIKEAKQTVKNWKSHNLSIGYVPTMGFLHDGHLSLVKNAKTQDKVIVSIFVNPMQFGPNEDFSSYPRDLERDIKMCQDNGVDMVFIPDAAQMYLKNFSTYVDMNTITDKLCGAKRLGHFRGVCTVLAKFFNILNPDIVYMGQKDAQQCVVVRHMVDDLNFDLKIQICPIIREEDGLAKSSRNVYLSEEERKASLAISQSIFLAEKLVQEGEKDTSKIIQAMKDILEKEKLIKIDYIELVDFNTMENIKNIADNVLGAVAAFVGKTRLIDNFLVQGLK.

Residue 30–37 (MGFLHDGH) coordinates ATP. His-37 acts as the Proton donor in catalysis. Gln-60 contributes to the (R)-pantoate binding site. Position 60 (Gln-60) interacts with beta-alanine. 146–149 (GQKD) contributes to the ATP binding site. Residue Gln-152 participates in (R)-pantoate binding. ATP contacts are provided by residues Ile-175 and 183-186 (KSSR).

This sequence belongs to the pantothenate synthetase family. As to quaternary structure, homodimer.

The protein resides in the cytoplasm. It carries out the reaction (R)-pantoate + beta-alanine + ATP = (R)-pantothenate + AMP + diphosphate + H(+). It functions in the pathway cofactor biosynthesis; (R)-pantothenate biosynthesis; (R)-pantothenate from (R)-pantoate and beta-alanine: step 1/1. Catalyzes the condensation of pantoate with beta-alanine in an ATP-dependent reaction via a pantoyl-adenylate intermediate. This chain is Pantothenate synthetase, found in Campylobacter jejuni (strain RM1221).